A 130-amino-acid chain; its full sequence is Small ribosomal subunit protein uS9 (130 aa).

This sequence belongs to the universal ribosomal protein uS9 family.

This chain is Small ribosomal subunit protein uS9, found in Desulfosudis oleivorans (strain DSM 6200 / JCM 39069 / Hxd3) (Desulfococcus oleovorans).